The following is a 352-amino-acid chain: Selenide, water dikinase (352 aa).

The active site involves cysteine 21. Residues lysine 24 and 51–53 (TND) contribute to the ATP site. Aspartate 54 contacts Mg(2+). Residues aspartate 71, aspartate 94, and 141–143 (GHS) each bind ATP. Residue aspartate 94 coordinates Mg(2+). Mg(2+) is bound at residue aspartate 231.

This sequence belongs to the selenophosphate synthase 1 family. Class I subfamily. As to quaternary structure, homodimer. Mg(2+) serves as cofactor.

The catalysed reaction is hydrogenselenide + ATP + H2O = selenophosphate + AMP + phosphate + 2 H(+). Functionally, synthesizes selenophosphate from selenide and ATP. This Myxococcus xanthus (strain DK1622) protein is Selenide, water dikinase.